The chain runs to 389 residues: Succinate--CoA ligase [ADP-forming] subunit beta (389 aa).

The 236-residue stretch at 9-244 (KQLLAEYGIP…KTQEDETEVT (236 aa)) folds into the ATP-grasp domain. ATP-binding positions include Lys-46, 53–55 (GRG), Gly-102, and Glu-107. Residues Asn-199 and Asp-213 each coordinate Mg(2+). Residues Asn-264 and 321–323 (GIV) contribute to the substrate site.

The protein belongs to the succinate/malate CoA ligase beta subunit family. As to quaternary structure, heterotetramer of two alpha and two beta subunits. Requires Mg(2+) as cofactor.

The enzyme catalyses succinate + ATP + CoA = succinyl-CoA + ADP + phosphate. The catalysed reaction is GTP + succinate + CoA = succinyl-CoA + GDP + phosphate. The protein operates within carbohydrate metabolism; tricarboxylic acid cycle; succinate from succinyl-CoA (ligase route): step 1/1. Succinyl-CoA synthetase functions in the citric acid cycle (TCA), coupling the hydrolysis of succinyl-CoA to the synthesis of either ATP or GTP and thus represents the only step of substrate-level phosphorylation in the TCA. The beta subunit provides nucleotide specificity of the enzyme and binds the substrate succinate, while the binding sites for coenzyme A and phosphate are found in the alpha subunit. The polypeptide is Succinate--CoA ligase [ADP-forming] subunit beta (Xanthomonas campestris pv. campestris (strain 8004)).